The following is a 685-amino-acid chain: DNA-directed RNA polymerase subunit beta' (685 aa).

Positions 69, 71, 87, and 90 each coordinate Zn(2+). Positions 489, 491, and 493 each coordinate Mg(2+).

The protein belongs to the RNA polymerase beta' chain family. RpoC1 subfamily. As to quaternary structure, in plastids the minimal PEP RNA polymerase catalytic core is composed of four subunits: alpha, beta, beta', and beta''. When a (nuclear-encoded) sigma factor is associated with the core the holoenzyme is formed, which can initiate transcription. Requires Mg(2+) as cofactor. Zn(2+) is required as a cofactor.

Its subcellular location is the plastid. The protein localises to the chloroplast. The catalysed reaction is RNA(n) + a ribonucleoside 5'-triphosphate = RNA(n+1) + diphosphate. DNA-dependent RNA polymerase catalyzes the transcription of DNA into RNA using the four ribonucleoside triphosphates as substrates. The polypeptide is DNA-directed RNA polymerase subunit beta' (Buxus microphylla (Littleleaf boxwood)).